Reading from the N-terminus, the 198-residue chain is Probable GTP-binding protein EngB (198 aa).

Residues 27-198 (DLPEVALAGR…ESWDTILSEL (172 aa)) enclose the EngB-type G domain. Residues 35–42 (GRSNVGKS), 62–66 (GKTQL), 80–83 (DVPG), 147–150 (TKAD), and 179–181 (FSS) contribute to the GTP site. Serine 42 and threonine 64 together coordinate Mg(2+).

Belongs to the TRAFAC class TrmE-Era-EngA-EngB-Septin-like GTPase superfamily. EngB GTPase family. The cofactor is Mg(2+).

Necessary for normal cell division and for the maintenance of normal septation. This is Probable GTP-binding protein EngB from Streptococcus agalactiae serotype III (strain NEM316).